Here is a 183-residue protein sequence, read N- to C-terminus: ATP-dependent protease subunit HslV (183 aa).

Residue Thr-7 is part of the active site. Gly-162, Cys-165, and Thr-168 together coordinate Na(+).

The protein belongs to the peptidase T1B family. HslV subfamily. A double ring-shaped homohexamer of HslV is capped on each side by a ring-shaped HslU homohexamer. The assembly of the HslU/HslV complex is dependent on binding of ATP.

It localises to the cytoplasm. It catalyses the reaction ATP-dependent cleavage of peptide bonds with broad specificity.. Allosterically activated by HslU binding. Protease subunit of a proteasome-like degradation complex believed to be a general protein degrading machinery. The sequence is that of ATP-dependent protease subunit HslV from Chromobacterium violaceum (strain ATCC 12472 / DSM 30191 / JCM 1249 / CCUG 213 / NBRC 12614 / NCIMB 9131 / NCTC 9757 / MK).